We begin with the raw amino-acid sequence, 290 residues long: 33 kDa chaperonin (290 aa).

Cystine bridges form between C235-C237 and C268-C271.

Belongs to the HSP33 family. Post-translationally, under oxidizing conditions two disulfide bonds are formed involving the reactive cysteines. Under reducing conditions zinc is bound to the reactive cysteines and the protein is inactive.

It is found in the cytoplasm. Functionally, redox regulated molecular chaperone. Protects both thermally unfolding and oxidatively damaged proteins from irreversible aggregation. Plays an important role in the bacterial defense system toward oxidative stress. The polypeptide is 33 kDa chaperonin (Streptococcus sanguinis (strain SK36)).